Reading from the N-terminus, the 536-residue chain is Protein ST7 homolog (536 aa).

2 helical membrane-spanning segments follow: residues 3-23 (CSWT…LFAL) and 49-69 (FYVA…IFEW). Residues 191 to 218 (LAEEESETVSQAENLLRRALRAIESTLN) are a coiled coil. The chain crosses the membrane as a helical span at residues 465-485 (TLMMLLQTFICLAICILAVLA).

This sequence belongs to the ST7 family.

The protein resides in the membrane. The polypeptide is Protein ST7 homolog (Caenorhabditis elegans).